The primary structure comprises 215 residues: Chloramphenicol acetyltransferase (215 aa).

His189 (proton acceptor) is an active-site residue.

This sequence belongs to the chloramphenicol acetyltransferase family. In terms of assembly, homotrimer.

The enzyme catalyses chloramphenicol + acetyl-CoA = chloramphenicol 3-acetate + CoA. This enzyme is an effector of chloramphenicol resistance in bacteria. This is Chloramphenicol acetyltransferase (cat) from Staphylococcus intermedius.